Consider the following 295-residue polypeptide: MNESESELQARLLAKALPFMQRYENKTIVVKYGGHAMGNPELGKAFASDIALLKQSGVNPIVVHGGGPQIGAMLNKMGIESKFEGGLRVTDQKTVEIVEMVLAGSINKEIVALINQTGEWAIGLCGKDGNMVFAEKARKTVKDPDSNIERVLDLGFVGEVVEVDRTLLDLLARSEMIPVIAPVAPGRDGATYNINADTFAGAIAGALNATRLLFLTDVAGVLDKNGQLIKELSVAEAHALIADGTISGGMIPKVETCIDAIKAGVQGVVILNGKTAHSVLLEIFTEHGIGTLIVP.

Residues 66–67 (GG), Arg88, and Asn193 each bind substrate.

Belongs to the acetylglutamate kinase family. ArgB subfamily.

It is found in the cytoplasm. The catalysed reaction is N-acetyl-L-glutamate + ATP = N-acetyl-L-glutamyl 5-phosphate + ADP. Its pathway is amino-acid biosynthesis; L-arginine biosynthesis; N(2)-acetyl-L-ornithine from L-glutamate: step 2/4. Functionally, catalyzes the ATP-dependent phosphorylation of N-acetyl-L-glutamate. This Rhizobium leguminosarum bv. trifolii (strain WSM2304) protein is Acetylglutamate kinase.